Here is a 440-residue protein sequence, read N- to C-terminus: Proline--tRNA ligase (440 aa).

The protein belongs to the class-II aminoacyl-tRNA synthetase family. ProS type 2 subfamily. Homodimer.

Its subcellular location is the cytoplasm. The catalysed reaction is tRNA(Pro) + L-proline + ATP = L-prolyl-tRNA(Pro) + AMP + diphosphate. Its function is as follows. Catalyzes the attachment of proline to tRNA(Pro) in a two-step reaction: proline is first activated by ATP to form Pro-AMP and then transferred to the acceptor end of tRNA(Pro). This chain is Proline--tRNA ligase, found in Rhizobium leguminosarum bv. trifolii (strain WSM2304).